The following is a 404-amino-acid chain: Cysteine desulfurase IscS (404 aa).

Pyridoxal 5'-phosphate-binding positions include 75–76, asparagine 155, glutamine 183, and 203–205; these read AT and SAH. An N6-(pyridoxal phosphate)lysine modification is found at lysine 206. Position 243 (threonine 243) interacts with pyridoxal 5'-phosphate. The Cysteine persulfide intermediate role is filled by cysteine 328. Cysteine 328 provides a ligand contact to [2Fe-2S] cluster.

This sequence belongs to the class-V pyridoxal-phosphate-dependent aminotransferase family. NifS/IscS subfamily. In terms of assembly, homodimer. Forms a heterotetramer with IscU, interacts with other sulfur acceptors. Requires pyridoxal 5'-phosphate as cofactor.

Its subcellular location is the cytoplasm. It catalyses the reaction (sulfur carrier)-H + L-cysteine = (sulfur carrier)-SH + L-alanine. It participates in cofactor biosynthesis; iron-sulfur cluster biosynthesis. Functionally, master enzyme that delivers sulfur to a number of partners involved in Fe-S cluster assembly, tRNA modification or cofactor biosynthesis. Catalyzes the removal of elemental sulfur atoms from cysteine to produce alanine. Functions as a sulfur delivery protein for Fe-S cluster synthesis onto IscU, an Fe-S scaffold assembly protein, as well as other S acceptor proteins. This Pseudomonas putida (strain W619) protein is Cysteine desulfurase IscS.